The chain runs to 353 residues: Lipase chaperone (353 aa).

The chain crosses the membrane as a helical span at residues 12–32 (IVLYLILGCVVVCGVWYSFDV).

This sequence belongs to the lipase chaperone family.

It is found in the cell inner membrane. Its function is as follows. May be involved in the folding of the extracellular lipase during its passage through the periplasm. This chain is Lipase chaperone, found in Xylella fastidiosa (strain M23).